The following is a 193-amino-acid chain: Frataxin, mitochondrial (193 aa).

The transit peptide at 1 to 72 (MIFNFLNKAS…KQQQQLSKSF (72 aa)) directs the protein to the mitochondrion.

This sequence belongs to the frataxin family. In terms of assembly, monomer. Oligomer.

Its subcellular location is the mitochondrion. The enzyme catalyses 4 Fe(2+) + O2 + 4 H(+) = 4 Fe(3+) + 2 H2O. Promotes the biosynthesis of heme as well as the assembly and repair of iron-sulfur clusters by delivering Fe(2+) to proteins involved in these pathways. May play a role in the protection against iron-catalyzed oxidative stress through its ability to catalyze the oxidation of Fe(2+) to Fe(3+). May be able to store large amounts of the metal in the form of a ferrihydrite mineral by oligomerization. The chain is Frataxin, mitochondrial (fxn) from Dictyostelium discoideum (Social amoeba).